Reading from the N-terminus, the 319-residue chain is Exopolyphosphatase 2 (319 aa).

This sequence belongs to the GppA/Ppx family. As to quaternary structure, homodimer.

It carries out the reaction [phosphate](n) + H2O = [phosphate](n-1) + phosphate + H(+). With respect to regulation, exopolyphosphatase activity is inhibited by ppGpp alarmones produced during the bacterial stringent response. In terms of biological role, degradation of inorganic polyphosphates (polyP). Releases orthophosphate processively from the ends of the polyP chain. Prefers long-chain length polyphosphates as substrates. The chain is Exopolyphosphatase 2 from Mycobacterium tuberculosis (strain CDC 1551 / Oshkosh).